A 274-amino-acid chain; its full sequence is Diaminopimelate epimerase (274 aa).

Substrate is bound by residues N11 and N60. The Proton donor role is filled by C69. Substrate contacts are provided by residues 70 to 71 (GN), N191, and 209 to 210 (ER). C218 functions as the Proton acceptor in the catalytic mechanism. Position 219-220 (219-220 (GS)) interacts with substrate.

It belongs to the diaminopimelate epimerase family. Homodimer.

It localises to the cytoplasm. The enzyme catalyses (2S,6S)-2,6-diaminopimelate = meso-2,6-diaminopimelate. Its pathway is amino-acid biosynthesis; L-lysine biosynthesis via DAP pathway; DL-2,6-diaminopimelate from LL-2,6-diaminopimelate: step 1/1. Functionally, catalyzes the stereoinversion of LL-2,6-diaminopimelate (L,L-DAP) to meso-diaminopimelate (meso-DAP), a precursor of L-lysine and an essential component of the bacterial peptidoglycan. The chain is Diaminopimelate epimerase from Caldanaerobacter subterraneus subsp. tengcongensis (strain DSM 15242 / JCM 11007 / NBRC 100824 / MB4) (Thermoanaerobacter tengcongensis).